Here is a 125-residue protein sequence, read N- to C-terminus: Cytochrome c oxidase assembly factor 6 homolog (125 aa).

N-acetylalanine is present on glycine 2. The region spanning 55–98 (RQVCWGARDEYWKCLDENLEDASQCKKLRSSFESSCPQQWIKYF) is the CHCH domain. The Cx9C motif signature appears at 58–68 (CWGARDEYWKC). Intrachain disulfides connect cysteine 58–cysteine 90 and cysteine 68–cysteine 79. A Cx10C motif motif is present at residues 79–90 (CKKLRSSFESSC).

It belongs to the cytochrome c oxidase subunit 6B family. As to quaternary structure, interacts with COA1. Found in a complex with TMEM177, COX20, MT-CO2/COX2, COX18, SCO1 and SCO2. Interacts with MT-CO2/COX2 and SCO2. Interacts with SCO1. Interacts with COX20 in a MT-CO2/COX2- and COX18-dependent manner. Interacts with COX16.

The protein resides in the mitochondrion intermembrane space. Functionally, involved in the maturation of the mitochondrial respiratory chain complex IV subunit MT-CO2/COX2. Thereby, may regulate early steps of complex IV assembly. Mitochondrial respiratory chain complex IV or cytochrome c oxidase is the component of the respiratory chain that catalyzes the transfer of electrons from intermembrane space cytochrome c to molecular oxygen in the matrix and as a consequence contributes to the proton gradient involved in mitochondrial ATP synthesis. May also be required for efficient formation of respiratory supercomplexes comprised of complexes III and IV. The polypeptide is Cytochrome c oxidase assembly factor 6 homolog (COA6) (Homo sapiens (Human)).